Reading from the N-terminus, the 392-residue chain is tRNA (guanine(26)-N(2)/guanine(27)-N(2))-dimethyltransferase (392 aa).

A Trm1 methyltransferase domain is found at 2 to 375; that stretch reads EIVQEGIAKI…LSFEEVMKKM (374 aa). Residues arginine 36, arginine 66, aspartate 84, glutamate 113, and alanine 114 each coordinate S-adenosyl-L-methionine. Zn(2+)-binding residues include cysteine 247, cysteine 250, cysteine 266, and cysteine 269.

This sequence belongs to the class I-like SAM-binding methyltransferase superfamily. Trm1 family.

The enzyme catalyses guanosine(26)/guanosine(27) in tRNA + 4 S-adenosyl-L-methionine = N(2)-dimethylguanosine(26)/N(2)-dimethylguanosine(27) in tRNA + 4 S-adenosyl-L-homocysteine + 4 H(+). Functionally, dimethylates the guanine residues at position 26 and 27 of one or more tRNAs using S-adenosyl-L-methionine as donor of the methyl groups. The polypeptide is tRNA (guanine(26)-N(2)/guanine(27)-N(2))-dimethyltransferase (Aquifex aeolicus (strain VF5)).